The primary structure comprises 212 residues: Ribonuclease HII (212 aa).

Residues 18-212 (GCVFGVDEAG…APVAQQELFR (195 aa)) enclose the RNase H type-2 domain. Positions 24, 25, and 118 each coordinate a divalent metal cation.

It belongs to the RNase HII family. Mn(2+) is required as a cofactor. It depends on Mg(2+) as a cofactor.

The protein resides in the cytoplasm. The catalysed reaction is Endonucleolytic cleavage to 5'-phosphomonoester.. In terms of biological role, endonuclease that specifically degrades the RNA of RNA-DNA hybrids. The protein is Ribonuclease HII of Erythrobacter litoralis (strain HTCC2594).